The following is a 224-amino-acid chain: UPF0758 protein Tbd_2588 (224 aa).

An MPN domain is found at 102–224 (ALSSPAAVRD…ALSFAEAGHL (123 aa)). Positions 173, 175, and 186 each coordinate Zn(2+). The JAMM motif signature appears at 173–186 (HNHPSGVNEPSQAD).

This sequence belongs to the UPF0758 family.

The polypeptide is UPF0758 protein Tbd_2588 (Thiobacillus denitrificans (strain ATCC 25259 / T1)).